Reading from the N-terminus, the 67-residue chain is Protein AaeX (67 aa).

A run of 2 helical transmembrane segments spans residues Leu-3–Ile-23 and Gly-39–Phe-59.

It belongs to the AaeX family.

The protein localises to the cell membrane. The protein is Protein AaeX of Yersinia pseudotuberculosis serotype O:1b (strain IP 31758).